The following is a 547-amino-acid chain: Large cysteine-rich periplasmic protein OmcB (547 aa).

The N-terminal stretch at Met1–Ala22 is a signal peptide. The interval Lys45 to Lys84 is disordered. Residues His52–His61 show a composition bias toward basic residues.

In terms of assembly, part of a disulfide cross-linked outer membrane complex (COMC) composed of the major outer membrane porin (MOMP), the small cysteine-rich protein (OmcA) and the large cysteine-rich periplasmic protein (OmcB).

It localises to the periplasm. Functionally, in elementary bodies (EBs, the infectious stage, which is able to survive outside the host cell) provides the structural integrity of the outer envelope through disulfide cross-links with the small cysteine-rich protein and the major outer membrane protein. It has been described in publications as the Sarkosyl-insoluble COMC (Chlamydia outer membrane complex), and serves as the functional equivalent of peptidoglycan. This is Large cysteine-rich periplasmic protein OmcB (omcB) from Chlamydia trachomatis serovar L2 (strain ATCC VR-902B / DSM 19102 / 434/Bu).